We begin with the raw amino-acid sequence, 434 residues long: Beta-enolase (434 aa).

At A2 the chain carries N-acetylalanine. A Phosphothreonine modification is found at T72. 2 positions are modified to phosphoserine: S83 and S157. Substrate is bound by residues H158 and E167. S176 is subject to Phosphoserine. T205 is modified (phosphothreonine). The active-site Proton donor is E210. The residue at position 229 (T229) is a Phosphothreonine. Residue Y236 is modified to Phosphotyrosine. D245 serves as a coordination point for Mg(2+). A Phosphoserine modification is found at S263. Substrate is bound by residues E293 and D318. Residues E293 and D318 each contribute to the Mg(2+) site. Residue K343 is the Proton acceptor of the active site. Substrate-binding positions include 370–373 and K394; that span reads SHRS.

It belongs to the enolase family. In terms of assembly, mammalian enolase is composed of 3 isozyme subunits, alpha, beta and gamma, which can form homodimers or heterodimers which are cell-type and development-specific. Interacts with PNKD. Mg(2+) is required as a cofactor.

The protein localises to the cytoplasm. The enzyme catalyses (2R)-2-phosphoglycerate = phosphoenolpyruvate + H2O. It participates in carbohydrate degradation; glycolysis; pyruvate from D-glyceraldehyde 3-phosphate: step 4/5. Its function is as follows. Glycolytic enzyme that catalyzes the conversion of 2-phosphoglycerate to phosphoenolpyruvate. Appears to have a function in striated muscle development and regeneration. The protein is Beta-enolase (ENO3) of Bos taurus (Bovine).